The following is a 253-amino-acid chain: Chloride intracellular channel protein 4 (253 aa).

Position 2 is an N-acetylalanine (A2). The required for insertion into the membrane stretch occupies residues 2–101 (ALSMPLNGLK…EEFLEEVLCP (100 aa)). S4 carries the post-translational modification Phosphoserine. Position 24 is an N6-acetyllysine (K24). A G-site motif is present at residues 35-38 (CPFS). The helical transmembrane segment at 37-57 (FSQRLFMILWLKGVVFSVTTV) threads the bilayer. The 164-residue stretch at 81-244 (NSEVKTDVNK…PSDKEVEIAY (164 aa)) folds into the GST C-terminal domain. An N6-acetyllysine modification is found at K130. A phosphoserine mark is found at S132, S167, and S236. Y244 is subject to Phosphotyrosine.

The protein belongs to the chloride channel CLIC family. In terms of assembly, monomer. Interacts with HRH30. Interacts with AKAP9. Detected in blood vessels in the retina (at protein level). Expressed to the greatest extent in vivo in heart, lung, liver, kidney, and skin.

The protein localises to the cytoplasm. The protein resides in the cytoskeleton. It is found in the microtubule organizing center. It localises to the centrosome. Its subcellular location is the cytoplasmic vesicle membrane. The protein localises to the nucleus. The protein resides in the cell membrane. It is found in the mitochondrion. It localises to the cell junction. The catalysed reaction is chloride(in) = chloride(out). It catalyses the reaction thiocyanate(in) = thiocyanate(out). It carries out the reaction nitrate(in) = nitrate(out). The enzyme catalyses iodide(out) = iodide(in). The catalysed reaction is bromide(in) = bromide(out). It catalyses the reaction fluoride(in) = fluoride(out). It carries out the reaction choline(out) = choline(in). Its function is as follows. In the soluble state, catalyzes glutaredoxin-like thiol disulfide exchange reactions with reduced glutathione as electron donor. Can insert into membranes and form voltage-dependent multi-ion conductive channels. Membrane insertion seems to be redox-regulated and may occur only under oxidizing conditions. Has alternate cellular functions like a potential role in angiogenesis or in maintaining apical-basolateral membrane polarity during mitosis and cytokinesis. Could also promote endothelial cell proliferation and regulate endothelial morphogenesis (tubulogenesis). Promotes cell-surface expression of HRH3. The chain is Chloride intracellular channel protein 4 (Clic4) from Mus musculus (Mouse).